The following is a 164-amino-acid chain: Ribosome maturation factor RimM (164 aa).

A PRC barrel domain is found at aspartate 93–isoleucine 164.

Belongs to the RimM family. In terms of assembly, binds ribosomal protein uS19.

Its subcellular location is the cytoplasm. In terms of biological role, an accessory protein needed during the final step in the assembly of 30S ribosomal subunit, possibly for assembly of the head region. Essential for efficient processing of 16S rRNA. May be needed both before and after RbfA during the maturation of 16S rRNA. It has affinity for free ribosomal 30S subunits but not for 70S ribosomes. The sequence is that of Ribosome maturation factor RimM from Orientia tsutsugamushi (strain Boryong) (Rickettsia tsutsugamushi).